A 198-amino-acid polypeptide reads, in one-letter code: Dual specificity protein phosphatase 1 (198 aa).

The interval 1–20 (MSSRDRGSPSSSSSSSSLPG) is disordered. Residues 8–17 (SPSSSSSSSS) show a composition bias toward low complexity. A caM binding domain 1 region spans residues 26 to 47 (EKVKNQIQALVRVIKVARTYRD). The region spanning 50–191 (VPSLIEQGLY…LQDLEKSMQV (142 aa)) is the Tyrosine-protein phosphatase domain. Residue Cys-135 is the Phosphocysteine intermediate of the active site. The caM binding domain 2 stretch occupies residues 151-180 (MKKHGMTLAQALQHVKSKRPVASPNAGFIR).

The protein belongs to the protein-tyrosine phosphatase family. Non-receptor class dual specificity subfamily. Interacts with calmodulin (CaM) in a calcium Ca(2+)-dependent manner. Expressed in roots, stems, leaves and flowers.

It localises to the nucleus. The protein resides in the cytoplasm. The enzyme catalyses O-phospho-L-tyrosyl-[protein] + H2O = L-tyrosyl-[protein] + phosphate. It carries out the reaction O-phospho-L-seryl-[protein] + H2O = L-seryl-[protein] + phosphate. The catalysed reaction is O-phospho-L-threonyl-[protein] + H2O = L-threonyl-[protein] + phosphate. Inhibited by sodium vanadate and sodium tungstate. NaF and spermifine repress specifically phosphoserine and phosphothreonine phosphatase activity. In terms of biological role, has a dual specificity toward Ser/Thr and Tyr-containing proteins. Dephosphorylates MPK4 in vitro. The protein is Dual specificity protein phosphatase 1 (DSPTP1) of Arabidopsis thaliana (Mouse-ear cress).